Reading from the N-terminus, the 368-residue chain is RNA polymerase sigma factor SigA (368 aa).

Basic and acidic residues predominate over residues asparagine 71 to asparagine 83. Residues asparagine 71–proline 90 form a disordered region. The interval leucine 135–threonine 205 is sigma-70 factor domain-2. Residues aspartate 159–glutamine 162 carry the Interaction with polymerase core subunit RpoC motif. The sigma-70 factor domain-3 stretch occupies residues glutamate 214–histidine 290. A sigma-70 factor domain-4 region spans residues valine 303 to histidine 356. The H-T-H motif DNA-binding region spans leucine 329–alanine 348.

The protein belongs to the sigma-70 factor family. RpoD/SigA subfamily. Interacts transiently with the RNA polymerase catalytic core.

Its subcellular location is the cytoplasm. Sigma factors are initiation factors that promote the attachment of RNA polymerase to specific initiation sites and are then released. This sigma factor is the primary sigma factor during exponential growth. This chain is RNA polymerase sigma factor SigA, found in Staphylococcus epidermidis (strain ATCC 35984 / DSM 28319 / BCRC 17069 / CCUG 31568 / BM 3577 / RP62A).